Here is a 133-residue protein sequence, read N- to C-terminus: Profilin Sal k 4.0301 (133 aa).

A disulfide bridge links cysteine 95 with cysteine 117.

It belongs to the profilin family. Occurs in many kinds of cells as a complex with monomeric actin in a 1:1 ratio. Expressed in pollen (at protein and mRNA level).

The protein resides in the cytoplasm. It localises to the cytoskeleton. In terms of biological role, binds to actin and affects the structure of the cytoskeleton. At high concentrations, profilin prevents the polymerization of actin, whereas it enhances it at low concentrations. In Kali turgidum (Prickly saltwort), this protein is Profilin Sal k 4.0301.